The primary structure comprises 352 residues: UPF0324 membrane protein BCE_5279 (352 aa).

The next 10 helical transmembrane spans lie at 25–47, 52–71, 111–130, 140–162, 169–191, 201–223, 230–252, 267–289, 291–313, and 328–350; these read FGFS…LAEL, IMGQ…AAIG, VLVI…YGLT, GILT…APQV, TAVG…TLLY, YGVF…APGG, AVIV…GLWF, LPIP…GIIP, VVAG…GLGL, and FVAG…YALG.

Belongs to the UPF0324 family.

It is found in the cell membrane. This Bacillus cereus (strain ATCC 10987 / NRS 248) protein is UPF0324 membrane protein BCE_5279.